A 157-amino-acid chain; its full sequence is Histidine-containing phosphotransfer protein 5 (157 aa).

N-acetylmethionine is present on Met-1. An HPt domain is found at 41-148; the sequence is TPDFVAEVVS…NLEKQILQAG (108 aa). His-83 bears the Phosphohistidine mark.

In terms of assembly, interacts with the B-type response regulators ARR1 and ARR2. Binds to AHK2, AHK3, AHK4 and AHK5. Post-translationally, two-component system major event consists of a His-to-Asp phosphorelay between a sensor histidine kinase (HK) and a response regulator (RR). In plants, the His-to-Asp phosphorelay involves an additional intermediate named Histidine-containing phosphotransfer protein (HPt). This multistep phosphorelay consists of a His-Asp-His-Asp sequential transfer of a phosphate group between first a His and an Asp of the HK protein, followed by the transfer to a conserved His of the HPt protein and finally the transfer to an Asp in the receiver domain of the RR protein. As to expression, expressed in the whole plant.

Its subcellular location is the cytoplasm. It is found in the cytosol. The protein resides in the nucleus. Functions as a two-component phosphorelay mediator between cytokinin sensor histidine kinases and response regulators (B-type ARRs). Plays an important role in propagating cytokinin signal transduction through the multistep His-to-Asp phosphorelay. The polypeptide is Histidine-containing phosphotransfer protein 5 (AHP5) (Arabidopsis thaliana (Mouse-ear cress)).